The following is a 366-amino-acid chain: Peptide chain release factor 2 (366 aa).

Gln253 carries the N5-methylglutamine modification.

It belongs to the prokaryotic/mitochondrial release factor family. Post-translationally, methylated by PrmC. Methylation increases the termination efficiency of RF2.

It localises to the cytoplasm. Peptide chain release factor 2 directs the termination of translation in response to the peptide chain termination codons UGA and UAA. The chain is Peptide chain release factor 2 from Yersinia pestis.